Consider the following 323-residue polypeptide: Delta-aminolevulinic acid dehydratase (323 aa).

Residues C118, C120, and C128 each contribute to the Zn(2+) site. K195 (schiff-base intermediate with substrate) is an active-site residue. Positions 205 and 217 each coordinate 5-aminolevulinate. E233 provides a ligand contact to Mg(2+). Residue K248 is the Schiff-base intermediate with substrate of the active site. Residues S274 and Y313 each coordinate 5-aminolevulinate.

This sequence belongs to the ALAD family. Homooctamer. Zn(2+) is required as a cofactor.

It carries out the reaction 2 5-aminolevulinate = porphobilinogen + 2 H2O + H(+). It functions in the pathway porphyrin-containing compound metabolism; protoporphyrin-IX biosynthesis; coproporphyrinogen-III from 5-aminolevulinate: step 1/4. Its function is as follows. Catalyzes an early step in the biosynthesis of tetrapyrroles. Binds two molecules of 5-aminolevulinate per subunit, each at a distinct site, and catalyzes their condensation to form porphobilinogen. The chain is Delta-aminolevulinic acid dehydratase (hemB) from Staphylococcus aureus.